The chain runs to 100 residues: Large ribosomal subunit protein uL23 (100 aa).

Belongs to the universal ribosomal protein uL23 family. As to quaternary structure, part of the 50S ribosomal subunit. Contacts protein L29, and trigger factor when it is bound to the ribosome.

In terms of biological role, one of the early assembly proteins it binds 23S rRNA. One of the proteins that surrounds the polypeptide exit tunnel on the outside of the ribosome. Forms the main docking site for trigger factor binding to the ribosome. The chain is Large ribosomal subunit protein uL23 from Xylella fastidiosa (strain 9a5c).